A 521-amino-acid chain; its full sequence is Glucose-6-phosphate isomerase (521 aa).

Glutamate 327 (proton donor) is an active-site residue. Residues histidine 358 and lysine 486 contribute to the active site.

The protein belongs to the GPI family.

Its subcellular location is the cytoplasm. The enzyme catalyses alpha-D-glucose 6-phosphate = beta-D-fructose 6-phosphate. The protein operates within carbohydrate biosynthesis; gluconeogenesis. It participates in carbohydrate degradation; glycolysis; D-glyceraldehyde 3-phosphate and glycerone phosphate from D-glucose: step 2/4. Functionally, catalyzes the reversible isomerization of glucose-6-phosphate to fructose-6-phosphate. This Bordetella bronchiseptica (strain ATCC BAA-588 / NCTC 13252 / RB50) (Alcaligenes bronchisepticus) protein is Glucose-6-phosphate isomerase.